The following is a 751-amino-acid chain: Photosystem I P700 chlorophyll a apoprotein A1 (751 aa).

8 helical membrane passes run 73–96, 159–182, 198–222, 294–312, 349–372, 388–414, 436–458, and 533–551; these read VFSA…FHGA, LYTT…FHYH, LNHH…HVSL, TAHH…GHMY, WHAQ…HHMY, LSLF…IFMV, AIIS…LYIH, and FLVH…LILL. [4Fe-4S] cluster-binding residues include cysteine 575 and cysteine 584. Helical transmembrane passes span 591 to 612 and 665 to 687; these read HVFL…HFSW and LSAY…MFLF. Histidine 676 contacts chlorophyll a'. Positions 684 and 692 each coordinate chlorophyll a. Residue tryptophan 693 coordinates phylloquinone. Residues 725-745 traverse the membrane as a helical segment; sequence AVGVAHYLLGGIATTWSFFLA.

Belongs to the PsaA/PsaB family. As to quaternary structure, the PsaA/B heterodimer binds the P700 chlorophyll special pair and subsequent electron acceptors. PSI consists of a core antenna complex that captures photons, and an electron transfer chain that converts photonic excitation into a charge separation. The eukaryotic PSI reaction center is composed of at least 11 subunits. The cofactor is P700 is a chlorophyll a/chlorophyll a' dimer, A0 is one or more chlorophyll a, A1 is one or both phylloquinones and FX is a shared 4Fe-4S iron-sulfur center..

It is found in the plastid. The protein localises to the chloroplast thylakoid membrane. It catalyses the reaction reduced [plastocyanin] + hnu + oxidized [2Fe-2S]-[ferredoxin] = oxidized [plastocyanin] + reduced [2Fe-2S]-[ferredoxin]. PsaA and PsaB bind P700, the primary electron donor of photosystem I (PSI), as well as the electron acceptors A0, A1 and FX. PSI is a plastocyanin/cytochrome c6-ferredoxin oxidoreductase, converting photonic excitation into a charge separation, which transfers an electron from the donor P700 chlorophyll pair to the spectroscopically characterized acceptors A0, A1, FX, FA and FB in turn. Oxidized P700 is reduced on the lumenal side of the thylakoid membrane by plastocyanin or cytochrome c6. The polypeptide is Photosystem I P700 chlorophyll a apoprotein A1 (Tetradesmus obliquus (Green alga)).